The following is a 187-amino-acid chain: Tumor necrosis factor ligand superfamily member 4 (187 aa).

Topologically, residues M1–K23 are cytoplasmic. A helical; Signal-anchor for type II membrane protein membrane pass occupies residues L24–C44. Topologically, residues Q45–P187 are extracellular. In terms of domain architecture, THD spans P58–I177. Disulfide bonds link C74-C164 and C101-C185. Residues N94 and N156 are each glycosylated (N-linked (GlcNAc...) asparagine).

This sequence belongs to the tumor necrosis factor family. As to quaternary structure, homotrimer.

It localises to the membrane. In terms of biological role, cytokine that binds to TNFRSF4. Co-stimulates T-cell proliferation and cytokine production. This Oryctolagus cuniculus (Rabbit) protein is Tumor necrosis factor ligand superfamily member 4 (TNFSF4).